We begin with the raw amino-acid sequence, 352 residues long: tRNA pseudouridine synthase D (352 aa).

Asp81 acts as the Nucleophile in catalysis. Residues 157 to 303 (GVPNYFGTQR…MDHERRILRL (147 aa)) enclose the TRUD domain.

The protein belongs to the pseudouridine synthase TruD family.

The catalysed reaction is uridine(13) in tRNA = pseudouridine(13) in tRNA. In terms of biological role, responsible for synthesis of pseudouridine from uracil-13 in transfer RNAs. This is tRNA pseudouridine synthase D from Pseudomonas putida (strain GB-1).